The primary structure comprises 131 residues: MPVTDSIADFITRIRNAGSAKNKTTDIPYTRVRENLSKLLLEKGYIKNYTVITSEQFPFIRVELKYMQDGQHAIKEISRVSKPGRRVYQGKDIKRYLGGLGLFILSTSKGILTDKEAREQNVGGEVLFRIY.

Belongs to the universal ribosomal protein uS8 family. As to quaternary structure, part of the 30S ribosomal subunit. Contacts proteins S5 and S12.

Its function is as follows. One of the primary rRNA binding proteins, it binds directly to 16S rRNA central domain where it helps coordinate assembly of the platform of the 30S subunit. This Chlorobaculum tepidum (strain ATCC 49652 / DSM 12025 / NBRC 103806 / TLS) (Chlorobium tepidum) protein is Small ribosomal subunit protein uS8.